The primary structure comprises 264 residues: 3-methyl-2-oxobutanoate hydroxymethyltransferase (264 aa).

Positions 44 and 83 each coordinate Mg(2+). 3-methyl-2-oxobutanoate is bound by residues 44–45 (DS), aspartate 83, and lysine 112. A Mg(2+)-binding site is contributed by glutamate 114. The active-site Proton acceptor is glutamate 181.

It belongs to the PanB family. As to quaternary structure, homodecamer; pentamer of dimers. Mg(2+) is required as a cofactor.

The protein resides in the cytoplasm. The enzyme catalyses 3-methyl-2-oxobutanoate + (6R)-5,10-methylene-5,6,7,8-tetrahydrofolate + H2O = 2-dehydropantoate + (6S)-5,6,7,8-tetrahydrofolate. It participates in cofactor biosynthesis; coenzyme A biosynthesis. Its function is as follows. Catalyzes the reversible reaction in which hydroxymethyl group from 5,10-methylenetetrahydrofolate is transferred onto alpha-ketoisovalerate to form ketopantoate. This is 3-methyl-2-oxobutanoate hydroxymethyltransferase from Pyrobaculum arsenaticum (strain DSM 13514 / JCM 11321 / PZ6).